The following is a 215-amino-acid chain: Probable GTP-binding protein EngB (215 aa).

Residues 30–204 (TGIEVAFAGR…RQKLDTWFSE (175 aa)) form the EngB-type G domain. Residues 38 to 45 (GRSNAGKS), 65 to 69 (GRTQL), 83 to 86 (DLPG), 150 to 153 (TKAD), and 183 to 185 (FSS) contribute to the GTP site. 2 residues coordinate Mg(2+): serine 45 and threonine 67.

This sequence belongs to the TRAFAC class TrmE-Era-EngA-EngB-Septin-like GTPase superfamily. EngB GTPase family. It depends on Mg(2+) as a cofactor.

Necessary for normal cell division and for the maintenance of normal septation. This is Probable GTP-binding protein EngB from Escherichia coli O1:K1 / APEC.